Here is a 291-residue protein sequence, read N- to C-terminus: Protease HtpX (291 aa).

2 helical membrane passes run 4-24 and 36-56; these read IALF…VLNI and LSGL…VSLL. Zn(2+) is bound at residue His-143. The active site involves Glu-144. His-147 lines the Zn(2+) pocket. 2 consecutive transmembrane segments (helical) span residues 151-171 and 199-219; these read GDMI…IFLS and FIVS…LTMW. A Zn(2+)-binding site is contributed by Glu-225.

It belongs to the peptidase M48B family. Zn(2+) is required as a cofactor.

Its subcellular location is the cell inner membrane. This Aliivibrio salmonicida (strain LFI1238) (Vibrio salmonicida (strain LFI1238)) protein is Protease HtpX.